Reading from the N-terminus, the 156-residue chain is Small ribosomal subunit protein uS7 (156 aa).

The protein belongs to the universal ribosomal protein uS7 family. Part of the 30S ribosomal subunit. Contacts proteins S9 and S11.

Functionally, one of the primary rRNA binding proteins, it binds directly to 16S rRNA where it nucleates assembly of the head domain of the 30S subunit. Is located at the subunit interface close to the decoding center, probably blocks exit of the E-site tRNA. The chain is Small ribosomal subunit protein uS7 from Ligilactobacillus salivarius (strain UCC118) (Lactobacillus salivarius).